The sequence spans 80 residues: Cell division activator CedA (80 aa).

It belongs to the CedA family.

In terms of biological role, activates the cell division inhibited by chromosomal DNA over-replication. In Citrobacter koseri (strain ATCC BAA-895 / CDC 4225-83 / SGSC4696), this protein is Cell division activator CedA.